The primary structure comprises 215 residues: Large ribosomal subunit protein uL4 (215 aa).

Residues threonine 46 to arginine 72 are disordered. Positions serine 56–alanine 71 are enriched in gly residues.

It belongs to the universal ribosomal protein uL4 family. In terms of assembly, part of the 50S ribosomal subunit.

Functionally, one of the primary rRNA binding proteins, this protein initially binds near the 5'-end of the 23S rRNA. It is important during the early stages of 50S assembly. It makes multiple contacts with different domains of the 23S rRNA in the assembled 50S subunit and ribosome. Its function is as follows. Forms part of the polypeptide exit tunnel. The chain is Large ribosomal subunit protein uL4 from Helicobacter pylori (strain ATCC 700392 / 26695) (Campylobacter pylori).